The sequence spans 253 residues: DNA polymerase sliding clamp 2 (253 aa).

It belongs to the PCNA family. As to quaternary structure, homotrimer. The subunits circularize to form a toroid; DNA passes through its center. Replication factor C (RFC) is required to load the toroid on the DNA. Interacts with TIP.

Its activity is regulated as follows. Inhibited by interaction with the PCNA inhibitor TIP. Sliding clamp subunit that acts as a moving platform for DNA processing. Responsible for tethering the catalytic subunit of DNA polymerase and other proteins to DNA during high-speed replication. This chain is DNA polymerase sliding clamp 2, found in Thermococcus kodakarensis (strain ATCC BAA-918 / JCM 12380 / KOD1) (Pyrococcus kodakaraensis (strain KOD1)).